The sequence spans 156 residues: Small ribosomal subunit protein eS10 (156 aa).

Positions L91–E156 are disordered. Basic and acidic residues predominate over residues T95 to G119.

Belongs to the eukaryotic ribosomal protein eS10 family.

It localises to the cytoplasm. In Lumbricus rubellus (Humus earthworm), this protein is Small ribosomal subunit protein eS10 (RPS10).